The sequence spans 972 residues: Macrophage colony-stimulating factor 1 receptor (972 aa).

Positions 1–19 are cleaved as a signal peptide; it reads MGPGVLLLLLVATAWHGQG. The Extracellular segment spans residues 20–517; sequence IPVIEPSVPE…HPPDEFLFTP (498 aa). Ig-like C2-type domains lie at 21 to 104, 107 to 197, 203 to 290, 299 to 399, and 402 to 502; these read PVIE…VKDP, PWNV…KVQK, PALT…HSTS, AYLN…LTLR, and PEVS…IPIS. 3 cysteine pairs are disulfide-bonded: Cys42–Cys84, Cys127–Cys177, and Cys224–Cys278. Asn45, Asn73, Asn153, Asn240, Asn275, Asn302, Asn335, Asn353, Asn412, Asn428, and Asn480 each carry an N-linked (GlcNAc...) asparagine glycan. Cys419 and Cys485 form a disulfide bridge. Residues 518-538 traverse the membrane as a helical segment; sequence VVVACMSIMALLLLLLLLLLY. The Cytoplasmic portion of the chain corresponds to 539 to 972; sequence KYKQKPKYQV…LLQPNNYQFC (434 aa). Positions 542–574 are regulatory juxtamembrane domain; it reads QKPKYQVRWKIIESYEGNSYTFIDPTQLPYNEK. A phosphotyrosine; by autocatalysis mark is found at Tyr546 and Tyr561. A Protein kinase domain is found at 582–910; that stretch reads LQFGKTLGAG…PTFQQICSFL (329 aa). Residues 588–596 and Lys616 each bind ATP; that span reads LGAGAFGKV. A phosphotyrosine; by autocatalysis mark is found at Tyr699 and Tyr708. Residue Ser713 is modified to Phosphoserine. Tyr723 bears the Phosphotyrosine; by autocatalysis mark. Asp778 functions as the Proton acceptor in the catalytic mechanism. The segment at 796 to 818 is activation loop; sequence DFGLARDIMNDSNYIVKGNARLP. Phosphotyrosine; by autocatalysis occurs at positions 809 and 923. Residues 918–950 are disordered; sequence RRERDYTNLPSSSRSGGSGSSSSELEEESSSEH. A compositionally biased stretch (low complexity) spans 928-940; that stretch reads SSSRSGGSGSSSS. Tyr969 is subject to Phosphotyrosine; by autocatalysis.

This sequence belongs to the protein kinase superfamily. Tyr protein kinase family. CSF-1/PDGF receptor subfamily. As to quaternary structure, interacts with INPPL1/SHIP2 and THOC5. Monomer. Homodimer. Interacts with CSF1 and IL34. Interaction with dimeric CSF1 or IL34 leads to receptor homodimerization. Interacts (tyrosine phosphorylated) with PLCG2 (via SH2 domain). Interacts (tyrosine phosphorylated) with PIK3R1 (via SH2 domain). Interacts (tyrosine phosphorylated) with FYN, YES1 and SRC (via SH2 domain). Interacts (tyrosine phosphorylated) with CBL, GRB2 and SLA2. Post-translationally, autophosphorylated in response to CSF1 or IL34 binding. Phosphorylation at Tyr-561 is important for normal down-regulation of signaling by ubiquitination, internalization and degradation. Phosphorylation at Tyr-561 and Tyr-809 is important for interaction with SRC family members, including FYN, YES1 and SRC, and for subsequent activation of these protein kinases. Phosphorylation at Tyr-699 and Tyr-923 is important for interaction with GRB2. Phosphorylation at Tyr-723 is important for interaction with PIK3R1. Phosphorylation at Tyr-708 is important for normal receptor degradation. Phosphorylation at Tyr-723 and Tyr-809 is important for interaction with PLCG2. Phosphorylation at Tyr-969 is important for interaction with CBL. Dephosphorylation by PTPN2 negatively regulates downstream signaling and macrophage differentiation. In terms of processing, ubiquitinated. Becomes rapidly polyubiquitinated after autophosphorylation, leading to its degradation. Expressed in bone marrow and in differentiated blood mononuclear cells.

It localises to the cell membrane. It carries out the reaction L-tyrosyl-[protein] + ATP = O-phospho-L-tyrosyl-[protein] + ADP + H(+). Present in an inactive conformation in the absence of bound ligand. CSF1 or IL34 binding leads to dimerization and activation by autophosphorylation on tyrosine residues. Inhibited by imatinib/STI-571 (Gleevec), dasatinib, sunitinib/SU11248, lestaurtinib/CEP-701, midostaurin/PKC-412, Ki20227, linifanib/ABT-869, Axitinib/AG013736, sorafenib/BAY 43-9006 and GW2580. Functionally, tyrosine-protein kinase that acts as a cell-surface receptor for CSF1 and IL34 and plays an essential role in the regulation of survival, proliferation and differentiation of hematopoietic precursor cells, especially mononuclear phagocytes, such as macrophages and monocytes. Promotes the release of pro-inflammatory chemokines in response to IL34 and CSF1, and thereby plays an important role in innate immunity and in inflammatory processes. Plays an important role in the regulation of osteoclast proliferation and differentiation, the regulation of bone resorption, and is required for normal bone and tooth development. Required for normal male and female fertility, and for normal development of milk ducts and acinar structures in the mammary gland during pregnancy. Promotes reorganization of the actin cytoskeleton, regulates formation of membrane ruffles, cell adhesion and cell migration, and promotes cancer cell invasion. Activates several signaling pathways in response to ligand binding, including the ERK1/2 and the JNK pathway. Phosphorylates PIK3R1, PLCG2, GRB2, SLA2 and CBL. Activation of PLCG2 leads to the production of the cellular signaling molecules diacylglycerol and inositol 1,4,5-trisphosphate, that then lead to the activation of protein kinase C family members, especially PRKCD. Phosphorylation of PIK3R1, the regulatory subunit of phosphatidylinositol 3-kinase, leads to activation of the AKT1 signaling pathway. Activated CSF1R also mediates activation of the MAP kinases MAPK1/ERK2 and/or MAPK3/ERK1, and of the SRC family kinases SRC, FYN and YES1. Activated CSF1R transmits signals both via proteins that directly interact with phosphorylated tyrosine residues in its intracellular domain, or via adapter proteins, such as GRB2. Promotes activation of STAT family members STAT3, STAT5A and/or STAT5B. Promotes tyrosine phosphorylation of SHC1 and INPP5D/SHIP-1. Receptor signaling is down-regulated by protein phosphatases, such as INPP5D/SHIP-1, that dephosphorylate the receptor and its downstream effectors, and by rapid internalization of the activated receptor. In the central nervous system, may play a role in the development of microglia macrophages. In Homo sapiens (Human), this protein is Macrophage colony-stimulating factor 1 receptor (CSF1R).